Reading from the N-terminus, the 957-residue chain is Glycine dehydrogenase (decarboxylating) (957 aa).

N6-(pyridoxal phosphate)lysine is present on Lys704.

This sequence belongs to the GcvP family. In terms of assembly, the glycine cleavage system is composed of four proteins: P, T, L and H. Requires pyridoxal 5'-phosphate as cofactor.

The catalysed reaction is N(6)-[(R)-lipoyl]-L-lysyl-[glycine-cleavage complex H protein] + glycine + H(+) = N(6)-[(R)-S(8)-aminomethyldihydrolipoyl]-L-lysyl-[glycine-cleavage complex H protein] + CO2. The glycine cleavage system catalyzes the degradation of glycine. The P protein binds the alpha-amino group of glycine through its pyridoxal phosphate cofactor; CO(2) is released and the remaining methylamine moiety is then transferred to the lipoamide cofactor of the H protein. The protein is Glycine dehydrogenase (decarboxylating) of Bordetella petrii (strain ATCC BAA-461 / DSM 12804 / CCUG 43448).